Consider the following 306-residue polypeptide: Bifunctional protein FolD 2 (306 aa).

Residues 169–171 (GHS) and isoleucine 235 each bind NADP(+).

This sequence belongs to the tetrahydrofolate dehydrogenase/cyclohydrolase family. As to quaternary structure, homodimer.

It carries out the reaction (6R)-5,10-methylene-5,6,7,8-tetrahydrofolate + NADP(+) = (6R)-5,10-methenyltetrahydrofolate + NADPH. The catalysed reaction is (6R)-5,10-methenyltetrahydrofolate + H2O = (6R)-10-formyltetrahydrofolate + H(+). It participates in one-carbon metabolism; tetrahydrofolate interconversion. In terms of biological role, catalyzes the oxidation of 5,10-methylenetetrahydrofolate to 5,10-methenyltetrahydrofolate and then the hydrolysis of 5,10-methenyltetrahydrofolate to 10-formyltetrahydrofolate. In Mesorhizobium japonicum (strain LMG 29417 / CECT 9101 / MAFF 303099) (Mesorhizobium loti (strain MAFF 303099)), this protein is Bifunctional protein FolD 2.